Consider the following 111-residue polypeptide: T cell receptor alpha variable 18 (111 aa).

A signal peptide spans Met-1–Gly-20. The Ig-like domain occupies Asp-21–Arg-111. Residue Asn-41 is glycosylated (N-linked (GlcNAc...) asparagine). Cys-42 and Cys-108 are disulfide-bonded.

In terms of assembly, alpha-beta TR is a heterodimer composed of an alpha and beta chain; disulfide-linked. The alpha-beta TR is associated with the transmembrane signaling CD3 coreceptor proteins to form the TR-CD3 (TcR or TCR). The assembly of alpha-beta TR heterodimers with CD3 occurs in the endoplasmic reticulum where a single alpha-beta TR heterodimer associates with one CD3D-CD3E heterodimer, one CD3G-CD3E heterodimer and one CD247 homodimer forming a stable octameric structure. CD3D-CD3E and CD3G-CD3E heterodimers preferentially associate with TR alpha and TR beta chains, respectively. The association of the CD247 homodimer is the last step of TcR assembly in the endoplasmic reticulum and is required for transport to the cell surface.

It is found in the cell membrane. V region of the variable domain of T cell receptor (TR) alpha chain that participates in the antigen recognition. Alpha-beta T cell receptors are antigen specific receptors which are essential to the immune response and are present on the cell surface of T lymphocytes. Recognize peptide-major histocompatibility (MH) (pMH) complexes that are displayed by antigen presenting cells (APC), a prerequisite for efficient T cell adaptive immunity against pathogens. Binding of alpha-beta TR to pMH complex initiates TR-CD3 clustering on the cell surface and intracellular activation of LCK that phosphorylates the ITAM motifs of CD3G, CD3D, CD3E and CD247 enabling the recruitment of ZAP70. In turn ZAP70 phosphorylates LAT, which recruits numerous signaling molecules to form the LAT signalosome. The LAT signalosome propagates signal branching to three major signaling pathways, the calcium, the mitogen-activated protein kinase (MAPK) kinase and the nuclear factor NF-kappa-B (NF-kB) pathways, leading to the mobilization of transcription factors that are critical for gene expression and essential for T cell growth and differentiation. The T cell repertoire is generated in the thymus, by V-(D)-J rearrangement. This repertoire is then shaped by intrathymic selection events to generate a peripheral T cell pool of self-MH restricted, non-autoaggressive T cells. Post-thymic interaction of alpha-beta TR with the pMH complexes shapes TR structural and functional avidity. The sequence is that of T cell receptor alpha variable 18 from Homo sapiens (Human).